A 263-amino-acid chain; its full sequence is Acyl-[acyl-carrier-protein]--UDP-N-acetylglucosamine O-acyltransferase (263 aa).

Belongs to the transferase hexapeptide repeat family. LpxA subfamily. In terms of assembly, homotrimer.

The protein localises to the cytoplasm. The catalysed reaction is a (3R)-hydroxyacyl-[ACP] + UDP-N-acetyl-alpha-D-glucosamine = a UDP-3-O-[(3R)-3-hydroxyacyl]-N-acetyl-alpha-D-glucosamine + holo-[ACP]. Its pathway is glycolipid biosynthesis; lipid IV(A) biosynthesis; lipid IV(A) from (3R)-3-hydroxytetradecanoyl-[acyl-carrier-protein] and UDP-N-acetyl-alpha-D-glucosamine: step 1/6. Its function is as follows. Involved in the biosynthesis of lipid A, a phosphorylated glycolipid that anchors the lipopolysaccharide to the outer membrane of the cell. The chain is Acyl-[acyl-carrier-protein]--UDP-N-acetylglucosamine O-acyltransferase from Campylobacter jejuni subsp. jejuni serotype O:2 (strain ATCC 700819 / NCTC 11168).